A 386-amino-acid chain; its full sequence is MGLWGQSVPTASSARAGRYPGARTASGTRPWLLDPKILKFVVFIVAVLLPVRVDSATIPRQDEVPQQTVAPQQQRRSLKEEECPAGSHRSEYTGACNPCTEGVDYTIASNNLPSCLLCTVCKSGQTNKSSCTTTRDTVCQCEKGSFQDKNSPEMCRTCRTGCPRGMVKVSNCTPRSDIKCKNESAASSTGKTPAAEETVTTILGMLASPYHYLIIIVVLVIILAVVVVGFSCRKKFISYLKGICSGGGGGPERVHRVLFRRRSCPSRVPGAEDNARNETLSNRYLQPTQVSEQEIQGQELAELTGVTVELPEEPQRLLEQAEAEGCQRRRLLVPVNDADSADISTLLDASATLEEGHAKETIQDQLVGSEKLFYEEDEAGSATSCL.

Disordered regions lie at residues 1-25 (MGLWGQSVPTASSARAGRYPGARTA) and 62-90 (DEVPQQTVAPQQQRRSLKEEECPAGSHRS). A signal peptide spans 1–55 (MGLWGQSVPTASSARAGRYPGARTASGTRPWLLDPKILKFVVFIVAVLLPVRVDS). Residues 56–211 (ATIPRQDEVP…ILGMLASPYH (156 aa)) lie on the Extracellular side of the membrane. TNFR-Cys repeat units follow at residues 58–97 (IPRQDEVPQQTVAPQQQRRSLKEEECPAGSHRSEYTGACN), 98–139 (PCTE…DTVC), and 140–180 (QCEK…DIKC). The span at 64–75 (VPQQTVAPQQQR) shows a compositional bias: polar residues. 7 cysteine pairs are disulfide-bonded: C83-C96, C99-C115, C118-C131, C121-C139, C141-C155, C158-C172, and C162-C180. N127 carries N-linked (GlcNAc...) asparagine glycosylation. N182 is a glycosylation site (N-linked (GlcNAc...) asparagine). A helical transmembrane segment spans residues 212 to 232 (YLIIIVVLVIILAVVVVGFSC). Topologically, residues 233-386 (RKKFISYLKG…DEAGSATSCL (154 aa)) are cytoplasmic. The Death; truncated domain occupies 340 to 366 (SADISTLLDASATLEEGHAKETIQDQL).

As to expression, widely expressed, in particular in fetal kidney, lung and liver, and in adult testis and liver. Also expressed in peripheral blood leukocytes, colon and small intestine, ovary, prostate, thymus, spleen, pancreas, kidney, lung, placenta and heart.

The protein localises to the membrane. Its function is as follows. Receptor for the cytotoxic ligand TRAIL. Contains a truncated death domain and hence is not capable of inducing apoptosis but protects against TRAIL-mediated apoptosis. Reports are contradictory with regards to its ability to induce the NF-kappa-B pathway. According to PubMed:9382840, it cannot but according to PubMed:9430226, it can induce the NF-kappa-B pathway. In Homo sapiens (Human), this protein is Tumor necrosis factor receptor superfamily member 10D.